A 103-amino-acid chain; its full sequence is Histone H4 (103 aa).

Position 6 is an N6-acetyl-N6-methyllysine; alternate (Lys-6). An N6-methyllysine; alternate mark is found at Lys-6, Lys-9, and Lys-13. Lys-13 is subject to N6-acetyl-N6-methyllysine; alternate. A DNA-binding region spans residues 17-21; sequence KRHRK. Lys-92 is modified (N6-glutaryllysine).

This sequence belongs to the histone H4 family. In terms of assembly, the nucleosome is a histone octamer containing two molecules each of H2A, H2B, H3 and H4 assembled in one H3-H4 heterotetramer and two H2A-H2B heterodimers. The octamer wraps approximately 147 bp of DNA. Post-translationally, glutarylation at Lys-92 (H4K91glu) destabilizes nucleosomes by promoting dissociation of the H2A-H2B dimers from nucleosomes.

It localises to the nucleus. The protein resides in the chromosome. Core component of nucleosome. Nucleosomes wrap and compact DNA into chromatin, limiting DNA accessibility to the cellular machineries which require DNA as a template. Histones thereby play a central role in transcription regulation, DNA repair, DNA replication and chromosomal stability. DNA accessibility is regulated via a complex set of post-translational modifications of histones, also called histone code, and nucleosome remodeling. In Mortierella alpina (Oleaginous fungus), this protein is Histone H4 (H4.1).